Reading from the N-terminus, the 128-residue chain is Ribonuclease pancreatic (128 aa).

Residues 1–13 are compositionally biased toward basic and acidic residues; that stretch reads GESRAEKFQRQHM. The interval 1 to 24 is disordered; that stretch reads GESRAEKFQRQHMDSGSSPSSSST. Residues Lys-7 and Arg-10 each coordinate substrate. Catalysis depends on His-12, which acts as the Proton acceptor. Disulfide bonds link Cys-26/Cys-84, Cys-40/Cys-95, Cys-58/Cys-110, and Cys-65/Cys-72. Residue Asn-34 is glycosylated (N-linked (GlcNAc...) asparagine). Substrate-binding positions include 41–45, Lys-66, and Arg-85; that span reads KSVNT. The active-site Proton donor is His-119.

The protein belongs to the pancreatic ribonuclease family. As to quaternary structure, monomer. Interacts with and forms tight 1:1 complexes with RNH1. Dimerization of two such complexes may occur. Interaction with RNH1 inhibits this protein. In terms of tissue distribution, pancreas and other tissues and body fluids (indicating it may have other physiological functions besides its role in digestion).

It is found in the secreted. The catalysed reaction is an [RNA] containing cytidine + H2O = an [RNA]-3'-cytidine-3'-phosphate + a 5'-hydroxy-ribonucleotide-3'-[RNA].. It carries out the reaction an [RNA] containing uridine + H2O = an [RNA]-3'-uridine-3'-phosphate + a 5'-hydroxy-ribonucleotide-3'-[RNA].. Its function is as follows. Endonuclease that catalyzes the cleavage of RNA on the 3' side of pyrimidine nucleotides. Acts on single-stranded and double-stranded RNA. This is Ribonuclease pancreatic (RNASE1) from Semnopithecus entellus (Northern plains gray langur).